The sequence spans 169 residues: Actin-related protein 2/3 complex subunit 4 (169 aa).

It belongs to the ARPC4 family. Component of the Arp2/3 complex composed of arpB/Arp2, arpC/Arp3, arcA/p41-arc, arcB/p34-arc, arcC/p21-arc, arcD/p20-arc and arcE/p16-arc. Interacts with carmil (via the region between the LRR domain and COOH-terminal proline-rich domain); carmil is required for Arp2/3-dependent actin nucleation. Arp2/3 complex, MyoB, MyoC, and the alpha and beta subunits of capping protein all form a larger complex with carmil.

Its subcellular location is the cytoplasm. It localises to the cytoskeleton. It is found in the cytosol. The protein resides in the cell cortex. The protein localises to the cell projection. Its subcellular location is the pseudopodium. Its function is as follows. Functions as a component of the Arp2/3 complex which is involved in regulation of actin polymerization and together with an activating nucleation-promoting factor (NPF) mediates the formation of branched actin networks. Seems to contact the pointed end of the daughter actin filament. The Arp2/3 complex is involved in organizing the actin system in cell motility and chemotaxis, in phagocytosis and macropinocytosis, at late steps of endosome processing, and in mitosis. In concert with a group of other proteins, the Arp2/3 complex plays a general role in the rapid activation and adaptation of the actin system to its multiple functions. The sequence is that of Actin-related protein 2/3 complex subunit 4 (arcD) from Dictyostelium discoideum (Social amoeba).